Consider the following 929-residue polypeptide: MLSKIIGSVVGTKNERELKRMHKVVSKINAYEATIQALSDEQLQQKTEEFKARHQNGESLDALLPEAFAVCREASLRVNGMRHYDVQLIGGITLHEGKIAEMKTGEGKTLMGTLAMYLNAISGKGVHLVTVNDYLAARDAELNRPLFGFLGMNVGVIYSQQPPQEKVAAYQADITYGTNNEYGFDYLRDNMVFSLREKKQRPLNFCIIDEIDSILIDEARTPLIISGQAEDSSRMYALINTIIPVLIRSKDEEANKNNEEEDFWIDEKNRQIEISEKGYEKIERFLIEVGELGENESLYSPSRLPLLAHVQAAIRAHHVFVKNIHYIVDDGEVVIVDENTGRTMPGRRWSEGLHQAVEAKENVEIQAENQTLATTTFQNFFRLYDKLSGMTGTADTEAAEFKSTYDLDVIVIPTHEPIARIDMDDQIFLTKLGKYKGIIREIQEIQAKGAPVLVGTATIEASEELSYLLDQEGVKHNVLNAKQHEREAEIIAQAGSPKSVTIATNMAGRGTDIILGGNWQSFIEDIDSVSPEEMQRLKAQWQIKHDQVVAAGGLHIIGSERHESRRIDNQLRGRAGRQGDPGMSRFFLSLEDDLMRIFAGDRVVNMMRAMGLKEDEAIEHKMVSKSIENAQGKVESRDFDARKNLLKYDDVANDQRKVIYGQRDDLLAEMDLLQAIKIMHQEVYNAMINQFIPPGSIDDQWNVDGLEDELENEFKIAMPINDWLDEDRRLDEEGLRAKLIQTALDRYDNRREQMGEKEAAQLERHFMLQSLDKHWKEHLTQMDQLRKGIHLRGYAQKNPEQEYKRESFELFQMMLGAIKSETVQDLSRVHIPTKEELAALEVQQRENAAHMQMQFEHSDIDNMDGGVERAAVQGRNVVAGAAGAGVAGAMAGNGNNDNEPNPYAGMNISRNAPCPCGSALKYKQCHGKI.

ATP contacts are provided by residues glutamine 87, 105 to 109, and aspartate 512; that span reads GEGKT. Cysteine 914, cysteine 916, cysteine 925, and histidine 926 together coordinate Zn(2+).

This sequence belongs to the SecA family. As to quaternary structure, monomer and homodimer. Part of the essential Sec protein translocation apparatus which comprises SecA, SecYEG and auxiliary proteins SecDF-YajC and YidC. Zn(2+) serves as cofactor.

Its subcellular location is the cell inner membrane. The protein localises to the cytoplasm. It carries out the reaction ATP + H2O + cellular proteinSide 1 = ADP + phosphate + cellular proteinSide 2.. In terms of biological role, part of the Sec protein translocase complex. Interacts with the SecYEG preprotein conducting channel. Has a central role in coupling the hydrolysis of ATP to the transfer of proteins into and across the cell membrane, serving both as a receptor for the preprotein-SecB complex and as an ATP-driven molecular motor driving the stepwise translocation of polypeptide chains across the membrane. The chain is Protein translocase subunit SecA from Psychrobacter arcticus (strain DSM 17307 / VKM B-2377 / 273-4).